The chain runs to 329 residues: rRNA 2'-O-methyltransferase fibrillarin (329 aa).

The interval 1–85 (MAFGAPRGRG…GGARGGARGG (85 aa)) is disordered. Gly residues predominate over residues 13–84 (RGGFGGRGGS…RGGARGGARG (72 aa)). Residues 181–182 (TS), 200–201 (EF), 225–226 (DA), and 245–248 (DVAQ) each bind S-adenosyl-L-methionine.

This sequence belongs to the methyltransferase superfamily. Fibrillarin family. As to quaternary structure, component of box C/D small nucleolar ribonucleoprotein (snoRNP) particles that contain SNU13, NOP1, SIK1/NOP56 and NOP58, plus a guide RNA. Post-translationally, by homology to other fibrillarins, some or all of the N-terminal domain arginines are modified to asymmetric dimethylarginine (DMA).

The protein localises to the nucleus. It is found in the nucleolus. The catalysed reaction is L-glutaminyl-[histone H2A] + S-adenosyl-L-methionine = N(5)-methyl-L-glutaminyl-[histone H2A] + S-adenosyl-L-homocysteine + H(+). Functionally, S-adenosyl-L-methionine-dependent methyltransferase that has the ability to methylate both RNAs and proteins. Involved in pre-rRNA processing. Utilizes the methyl donor S-adenosyl-L-methionine to catalyze the site-specific 2'-hydroxyl methylation of ribose moieties in pre-ribosomal RNA. Site specificity is provided by a guide RNA that base pairs with the substrate. Methylation occurs at a characteristic distance from the sequence involved in base pairing with the guide RNA. Also acts as a protein methyltransferase by mediating methylation of 'Gln-105' of histone H2A (H2AQ105me), a modification that impairs binding of the FACT complex and is specifically present at 35S ribosomal DNA locus. The chain is rRNA 2'-O-methyltransferase fibrillarin (NOP1) from Debaryomyces hansenii (strain ATCC 36239 / CBS 767 / BCRC 21394 / JCM 1990 / NBRC 0083 / IGC 2968) (Yeast).